Reading from the N-terminus, the 590-residue chain is UvrABC system protein C (590 aa).

In terms of domain architecture, GIY-YIG spans 14 to 91; sequence DQPGCYLMKD…IKKYDPKYNV (78 aa). The region spanning 196–231 is the UVR domain; it reads NEIKKELEAKMAEAAEKLEFERAKEFRDQLAHIEST.

It belongs to the UvrC family. As to quaternary structure, interacts with UvrB in an incision complex.

Its subcellular location is the cytoplasm. Its function is as follows. The UvrABC repair system catalyzes the recognition and processing of DNA lesions. UvrC both incises the 5' and 3' sides of the lesion. The N-terminal half is responsible for the 3' incision and the C-terminal half is responsible for the 5' incision. This chain is UvrABC system protein C, found in Bacillus velezensis (strain DSM 23117 / BGSC 10A6 / LMG 26770 / FZB42) (Bacillus amyloliquefaciens subsp. plantarum).